Consider the following 443-residue polypeptide: Glutamate--tRNA ligase 1 (443 aa).

A 'HIGH' region motif is present at residues 7–17 (PSPTGYLHVGN). Positions 236–240 (KISKR) match the 'KMSKS' region motif. Lys-239 contacts ATP.

This sequence belongs to the class-I aminoacyl-tRNA synthetase family. Glutamate--tRNA ligase type 1 subfamily. In terms of assembly, monomer.

Its subcellular location is the cytoplasm. The enzyme catalyses tRNA(Glu) + L-glutamate + ATP = L-glutamyl-tRNA(Glu) + AMP + diphosphate. Catalyzes the attachment of glutamate to tRNA(Glu) in a two-step reaction: glutamate is first activated by ATP to form Glu-AMP and then transferred to the acceptor end of tRNA(Glu). This Ehrlichia chaffeensis (strain ATCC CRL-10679 / Arkansas) protein is Glutamate--tRNA ligase 1.